The following is a 401-amino-acid chain: MSAIMLRSGNVARSTILAGGPLIGGPMTFRSAVSSTRTFSLFTKARIQSDDMKRASLSLQPSVREAEKSQGPVVGSEGRGVEGPHYQDQVSHNVLSDASTTGAWTMFNPIYTEKELNTVQVVGRAPVTFGDKAAHRTVKFLRKCFDLLTGYTPYEVPASVLAQKPIPIAELRSKGKLLSDQKWLFRIILLESIAGVPGMVGGTLRHLRSMRLLKRDGGWIHSLLEEAENERMHLLTFMTIAQPGIFTRALVLAAQGVFYNAFFLTYLISPRIAHRFVGALEEEAVRTYTHCISDMEAGLIPEWKDMPAPAIAIDYWRLPASSSLLDVIRAVRADEATHRFVNHSLANLDQKRDFNPFALSEASPEERGSKWGYTREESAKFALEQQRKLMAASEKSSGLVE.

The segment at 53–81 (KRASLSLQPSVREAEKSQGPVVGSEGRGV) is disordered. The chain crosses the membrane as a helical span at residues 184–204 (LFRIILLESIAGVPGMVGGTL). Fe cation-binding residues include glutamate 191, glutamate 230, and histidine 233. Residues 249-269 (ALVLAAQGVFYNAFFLTYLIS) form a helical membrane-spanning segment. Residues glutamate 281, glutamate 282, glutamate 335, and histidine 338 each contribute to the Fe cation site.

The protein belongs to the alternative oxidase family. The cofactor is Fe cation.

Its subcellular location is the mitochondrion inner membrane. Catalyzes cyanide-resistant oxygen consumption. May increase respiration when the cytochrome respiratory pathway is restricted, or in response to low temperatures. This chain is Alternative oxidase, mitochondrial (AOX1), found in Cryptococcus neoformans var. grubii serotype A (strain H99 / ATCC 208821 / CBS 10515 / FGSC 9487) (Filobasidiella neoformans var. grubii).